A 628-amino-acid polypeptide reads, in one-letter code: NUAK family SNF1-like kinase 2 (628 aa).

Met1 carries the post-translational modification N-acetylmethionine. A Protein kinase domain is found at 53 to 303; it reads YEFLETLGKG…LEDVASHWWV (251 aa). ATP is bound by residues 59–67 and Lys81; that span reads LGKGTYGKV. Catalysis depends on Asp175, which acts as the Proton acceptor. Thr208 bears the Phosphothreonine mark. 2 disordered regions span residues 355-492 and 522-570; these read KQHA…PQAS and GSLD…PLRG. Residues 428 to 444 show a composition bias toward pro residues; the sequence is ELSPIPVSPGQAAPPLP. The residue at position 435 (Ser435) is a Phosphoserine. Residues 457 to 469 are compositionally biased toward low complexity; the sequence is SGYYSSPEPSESG. A phosphoserine mark is found at Ser523, Ser544, Ser547, and Ser573.

This sequence belongs to the protein kinase superfamily. CAMK Ser/Thr protein kinase family. SNF1 subfamily. It depends on Mg(2+) as a cofactor. In terms of processing, phosphorylated at Thr-208 by STK11/LKB1 in complex with STE20-related adapter-alpha (STRADA) pseudo kinase and CAB39. Autophosphorylation is also possible at Thr-208.

The enzyme catalyses L-seryl-[protein] + ATP = O-phospho-L-seryl-[protein] + ADP + H(+). It catalyses the reaction L-threonyl-[protein] + ATP = O-phospho-L-threonyl-[protein] + ADP + H(+). With respect to regulation, activated by phosphorylation on Thr-208. In terms of biological role, stress-activated kinase involved in tolerance to glucose starvation. Induces cell-cell detachment by increasing F-actin conversion to G-actin. Expression is induced by CD95 or TNF-alpha, via NF-kappa-B. Protects cells from CD95-mediated apoptosis and is required for the increased motility and invasiveness of CD95-activated tumor cells. Phosphorylates LATS1 and LATS2. Plays a key role in neural tube closure during embryonic development through LATS2 phosphorylation and regulation of the nuclear localization of YAP1 a critical downstream regulatory target in the Hippo signaling pathway. The polypeptide is NUAK family SNF1-like kinase 2 (Pongo abelii (Sumatran orangutan)).